Reading from the N-terminus, the 420-residue chain is Argininosuccinate synthase (420 aa).

ATP is bound at residue 11 to 19; it reads AFSGGLDTT. Tyr88 provides a ligand contact to L-citrulline. Residue Gly118 participates in ATP binding. Residues Thr120, Asn124, and Asp125 each coordinate L-aspartate. Asn124 provides a ligand contact to L-citrulline. L-citrulline contacts are provided by Arg128, Ser174, Ser183, Glu257, and Tyr269. Residues 401–420 form a disordered region; that stretch reads KGAAVTDGSGDHAASEDTEE. Over residues 409–420 the composition is skewed to basic and acidic residues; sequence SGDHAASEDTEE.

The protein belongs to the argininosuccinate synthase family. Type 1 subfamily. In terms of assembly, homotetramer.

The protein localises to the cytoplasm. The catalysed reaction is L-citrulline + L-aspartate + ATP = 2-(N(omega)-L-arginino)succinate + AMP + diphosphate + H(+). Its pathway is amino-acid biosynthesis; L-arginine biosynthesis; L-arginine from L-ornithine and carbamoyl phosphate: step 2/3. This is Argininosuccinate synthase from Haloarcula marismortui (strain ATCC 43049 / DSM 3752 / JCM 8966 / VKM B-1809) (Halobacterium marismortui).